Consider the following 167-residue polypeptide: UPF0102 protein RB9115 (167 aa).

Belongs to the UPF0102 family.

This Rhodopirellula baltica (strain DSM 10527 / NCIMB 13988 / SH1) protein is UPF0102 protein RB9115.